The sequence spans 243 residues: Carboxy-S-adenosyl-L-methionine synthase (243 aa).

Residues Tyr-39, 64–66, 90–91, 118–119, Asn-133, and Arg-200 contribute to the S-adenosyl-L-methionine site; these read GCS, DN, and DL.

This sequence belongs to the class I-like SAM-binding methyltransferase superfamily. Cx-SAM synthase family. Homodimer.

It carries out the reaction prephenate + S-adenosyl-L-methionine = carboxy-S-adenosyl-L-methionine + 3-phenylpyruvate + H2O. Catalyzes the conversion of S-adenosyl-L-methionine (SAM) to carboxy-S-adenosyl-L-methionine (Cx-SAM). The polypeptide is Carboxy-S-adenosyl-L-methionine synthase (Idiomarina loihiensis (strain ATCC BAA-735 / DSM 15497 / L2-TR)).